The primary structure comprises 265 residues: Hydroxyethylthiazole kinase (265 aa).

Residue methionine 36 participates in substrate binding. The ATP site is built by lysine 112 and serine 160. Glycine 187 lines the substrate pocket.

This sequence belongs to the Thz kinase family. Requires Mg(2+) as cofactor.

It catalyses the reaction 5-(2-hydroxyethyl)-4-methylthiazole + ATP = 4-methyl-5-(2-phosphooxyethyl)-thiazole + ADP + H(+). It participates in cofactor biosynthesis; thiamine diphosphate biosynthesis; 4-methyl-5-(2-phosphoethyl)-thiazole from 5-(2-hydroxyethyl)-4-methylthiazole: step 1/1. In terms of biological role, catalyzes the phosphorylation of the hydroxyl group of 4-methyl-5-beta-hydroxyethylthiazole (THZ). The chain is Hydroxyethylthiazole kinase from Clostridium perfringens (strain SM101 / Type A).